Here is a 638-residue protein sequence, read N- to C-terminus: Zinc finger protein 143 (638 aa).

An N-acetylmethionine modification is found at Met1. A Glycyl lysine isopeptide (Lys-Gly) (interchain with G-Cter in SUMO2) cross-link involves residue Lys213. C2H2-type zinc fingers lie at residues Phe237–His261, Tyr267–His291, Tyr297–His321, and Phe327–His351. Thr352 is modified (phosphothreonine). C2H2-type zinc fingers lie at residues Tyr357–His381, Tyr387–His411, and Tyr417–His440. A Glycyl lysine isopeptide (Lys-Gly) (interchain with G-Cter in SUMO2) cross-link involves residue Lys406.

The protein belongs to the GLI C2H2-type zinc-finger protein family. In terms of assembly, interacts with CHD8. Forms a complex with HCFC1 and ZNF143. Expressed in all tissues tested, with the strongest expression in ovary.

The protein resides in the nucleus. Transcriptional activator. Activates the gene for selenocysteine tRNA (tRNAsec). Binds to the SPH motif of small nuclear RNA (snRNA) gene promoters. Participates in efficient U6 RNA polymerase III transcription via its interaction with CHD8. In complex with HCFC1 and ZNF143, regulates the expression of several genes, including AP2S1, ESCO2, OPHN1, RBL1, UBXN8 and ZNF32. The polypeptide is Zinc finger protein 143 (ZNF143) (Homo sapiens (Human)).